We begin with the raw amino-acid sequence, 524 residues long: Bifunctional purine biosynthesis protein PurH (524 aa).

Positions 1-145 (MIQQALLSVS…KNHRDVTVIV (145 aa)) constitute an MGS-like domain.

It belongs to the PurH family.

It carries out the reaction (6R)-10-formyltetrahydrofolate + 5-amino-1-(5-phospho-beta-D-ribosyl)imidazole-4-carboxamide = 5-formamido-1-(5-phospho-D-ribosyl)imidazole-4-carboxamide + (6S)-5,6,7,8-tetrahydrofolate. It catalyses the reaction IMP + H2O = 5-formamido-1-(5-phospho-D-ribosyl)imidazole-4-carboxamide. Its pathway is purine metabolism; IMP biosynthesis via de novo pathway; 5-formamido-1-(5-phospho-D-ribosyl)imidazole-4-carboxamide from 5-amino-1-(5-phospho-D-ribosyl)imidazole-4-carboxamide (10-formyl THF route): step 1/1. It participates in purine metabolism; IMP biosynthesis via de novo pathway; IMP from 5-formamido-1-(5-phospho-D-ribosyl)imidazole-4-carboxamide: step 1/1. The protein is Bifunctional purine biosynthesis protein PurH of Ralstonia pickettii (strain 12J).